The sequence spans 251 residues: Hydroxyacylglutathione hydrolase (251 aa).

The Zn(2+) site is built by H53, H55, D57, H58, H110, D127, and H165.

Belongs to the metallo-beta-lactamase superfamily. Glyoxalase II family. As to quaternary structure, monomer. The cofactor is Zn(2+).

It catalyses the reaction an S-(2-hydroxyacyl)glutathione + H2O = a 2-hydroxy carboxylate + glutathione + H(+). It participates in secondary metabolite metabolism; methylglyoxal degradation; (R)-lactate from methylglyoxal: step 2/2. Functionally, thiolesterase that catalyzes the hydrolysis of S-D-lactoyl-glutathione to form glutathione and D-lactic acid. The chain is Hydroxyacylglutathione hydrolase from Shigella dysenteriae serotype 1 (strain Sd197).